A 124-amino-acid polypeptide reads, in one-letter code: U33-theraphotoxin-Cg1c (124 aa).

Residues 1 to 17 (MKFAVAIAFTLLVCVFA) form the signal peptide. 5 disulfides stabilise this stretch: Cys-26-Cys-37, Cys-31-Cys-51, Cys-36-Cys-75, Cys-61-Cys-83, and Cys-77-Cys-94. The segment covering 93–108 (RCQEESGKSDKSKESQ) has biased composition (basic and acidic residues). Positions 93–124 (RCQEESGKSDKSKESQGSDESEESEESKESSG) are disordered. Positions 109-118 (GSDESEESEE) are enriched in acidic residues.

The protein belongs to the neurotoxin 32 family. Expressed by the venom gland.

Its subcellular location is the secreted. The sequence is that of U33-theraphotoxin-Cg1c from Chilobrachys guangxiensis (Chinese earth tiger tarantula).